Reading from the N-terminus, the 816-residue chain is Oxysterol-binding protein-related protein 1D (816 aa).

The PH domain maps to 92–229 (GAGVAGIMYK…WVEAFQVAKD (138 aa)). Residues 290–321 (KHIILLDTLRQLETEKIELEATVVDETKEHDS) are a coiled coil. Residues 340-362 (SASDSEADNESQDGADVESDEDD) are disordered. Over residues 344-362 (SEADNESQDGADVESDEDD) the composition is skewed to acidic residues. A coiled-coil region spans residues 735–764 (NGEYESANAEKLRLEQLQRQARRLQEKGWK).

Belongs to the OSBP family. In terms of tissue distribution, expressed in roots, leaves, stems and flowers.

Its function is as follows. May be involved in the transport of sterols. The polypeptide is Oxysterol-binding protein-related protein 1D (ORP1D) (Arabidopsis thaliana (Mouse-ear cress)).